A 145-amino-acid chain; its full sequence is Large ribosomal subunit protein uL13 (145 aa).

The protein belongs to the universal ribosomal protein uL13 family. As to quaternary structure, part of the 50S ribosomal subunit.

Its function is as follows. This protein is one of the early assembly proteins of the 50S ribosomal subunit, although it is not seen to bind rRNA by itself. It is important during the early stages of 50S assembly. The protein is Large ribosomal subunit protein uL13 of Staphylococcus carnosus (strain TM300).